Here is a 246-residue protein sequence, read N- to C-terminus: 2-C-methyl-D-erythritol 4-phosphate cytidylyltransferase (246 aa).

This sequence belongs to the IspD/TarI cytidylyltransferase family. IspD subfamily.

The catalysed reaction is 2-C-methyl-D-erythritol 4-phosphate + CTP + H(+) = 4-CDP-2-C-methyl-D-erythritol + diphosphate. The protein operates within isoprenoid biosynthesis; isopentenyl diphosphate biosynthesis via DXP pathway; isopentenyl diphosphate from 1-deoxy-D-xylulose 5-phosphate: step 2/6. Functionally, catalyzes the formation of 4-diphosphocytidyl-2-C-methyl-D-erythritol from CTP and 2-C-methyl-D-erythritol 4-phosphate (MEP). This Clostridium tetani (strain Massachusetts / E88) protein is 2-C-methyl-D-erythritol 4-phosphate cytidylyltransferase.